The sequence spans 57 residues: COP9 signalosome complex subunit 9 (57 aa).

Residue threonine 26 is modified to Phosphothreonine.

The protein belongs to the CSN9 family. In terms of assembly, component of the CSN complex, composed of COPS1/GPS1, COPS2, COPS3, COPS4, COPS5, COPS6, COPS7 (COPS7A or COPS7B), COPS8 and COPS9. In the complex, it interacts directly with COPS3, COPS5 and COPS6.

The protein resides in the nucleus. Its subcellular location is the cytoplasm. The protein localises to the nucleoplasm. Component of the COP9 signalosome complex (CSN), a complex involved in various cellular and developmental processes. The CSN complex is an essential regulator of the ubiquitin (Ubl) conjugation pathway by mediating the deneddylation of the cullin subunits of SCF-type E3 ligase complexes, leading to decrease the Ubl ligase activity of SCF-type complexes such as SCF, CSA or DDB2. The complex is also involved in phosphorylation of p53/TP53, c-jun/JUN, IkappaBalpha/NFKBIA, ITPK1 and IRF8/ICSBP, possibly via its association with CK2 and PKD kinases. CSN-dependent phosphorylation of TP53 and JUN promotes and protects degradation by the Ubl system, respectively. Plays a role in cell proliferation. This chain is COP9 signalosome complex subunit 9, found in Bos taurus (Bovine).